Here is a 253-residue protein sequence, read N- to C-terminus: Hydroxyacylglutathione hydrolase (253 aa).

Zn(2+) is bound by residues His-54, His-56, Asp-58, His-59, His-112, Asp-131, and His-169.

Belongs to the metallo-beta-lactamase superfamily. Glyoxalase II family. Monomer. Zn(2+) is required as a cofactor.

It carries out the reaction an S-(2-hydroxyacyl)glutathione + H2O = a 2-hydroxy carboxylate + glutathione + H(+). It participates in secondary metabolite metabolism; methylglyoxal degradation; (R)-lactate from methylglyoxal: step 2/2. Thiolesterase that catalyzes the hydrolysis of S-D-lactoyl-glutathione to form glutathione and D-lactic acid. This chain is Hydroxyacylglutathione hydrolase, found in Bartonella henselae (strain ATCC 49882 / DSM 28221 / CCUG 30454 / Houston 1) (Rochalimaea henselae).